A 404-amino-acid polypeptide reads, in one-letter code: Probable tRNA sulfurtransferase (404 aa).

Residues 60–165 (HEVAESLKEI…DEAAYISYEN (106 aa)) form the THUMP domain. ATP contacts are provided by residues 183 to 184 (ML), 208 to 209 (HF), Arg265, Gly287, and Gln296.

This sequence belongs to the ThiI family.

The protein localises to the cytoplasm. The enzyme catalyses [ThiI sulfur-carrier protein]-S-sulfanyl-L-cysteine + a uridine in tRNA + 2 reduced [2Fe-2S]-[ferredoxin] + ATP + H(+) = [ThiI sulfur-carrier protein]-L-cysteine + a 4-thiouridine in tRNA + 2 oxidized [2Fe-2S]-[ferredoxin] + AMP + diphosphate. It catalyses the reaction [ThiS sulfur-carrier protein]-C-terminal Gly-Gly-AMP + S-sulfanyl-L-cysteinyl-[cysteine desulfurase] + AH2 = [ThiS sulfur-carrier protein]-C-terminal-Gly-aminoethanethioate + L-cysteinyl-[cysteine desulfurase] + A + AMP + 2 H(+). The protein operates within cofactor biosynthesis; thiamine diphosphate biosynthesis. In terms of biological role, catalyzes the ATP-dependent transfer of a sulfur to tRNA to produce 4-thiouridine in position 8 of tRNAs, which functions as a near-UV photosensor. Also catalyzes the transfer of sulfur to the sulfur carrier protein ThiS, forming ThiS-thiocarboxylate. This is a step in the synthesis of thiazole, in the thiamine biosynthesis pathway. The sulfur is donated as persulfide by IscS. In Streptococcus agalactiae serotype Ia (strain ATCC 27591 / A909 / CDC SS700), this protein is Probable tRNA sulfurtransferase.